Reading from the N-terminus, the 97-residue chain is Vitelline membrane protein 15a-2 (97 aa).

An N-terminal signal peptide occupies residues 1–19 (MNKIIAALVLFTAVIGALA). Residues 20–23 (DYPA) form a required for binding to the gut receptor region. The interval 26 to 46 (PPPPKPYHAPPPPPYHAPPHH) is disordered. One can recognise a VM domain in the interval 61–97 (KAPAAKCGANLLVGCAPSVAHVPCVPVHPHPPPPAHY).

It belongs to the vitelline membrane protein family. As to expression, expressed in the anterior region of the follicle cells.

The protein resides in the secreted. Its function is as follows. Has an oostatic activity. Inhibits trypsin biosynthesis in the midgut epithelial cells which indirectly reduces the vitellogenin concentration in the hemolymph resulting in inhibition of oocyte development. This chain is Vitelline membrane protein 15a-2 (15a-2), found in Aedes aegypti (Yellowfever mosquito).